A 304-amino-acid polypeptide reads, in one-letter code: Porphobilinogen deaminase (304 aa).

The residue at position 240 (cysteine 240) is an S-(dipyrrolylmethanemethyl)cysteine.

It belongs to the HMBS family. In terms of assembly, monomer. Dipyrromethane is required as a cofactor.

The enzyme catalyses 4 porphobilinogen + H2O = hydroxymethylbilane + 4 NH4(+). It functions in the pathway porphyrin-containing compound metabolism; protoporphyrin-IX biosynthesis; coproporphyrinogen-III from 5-aminolevulinate: step 2/4. Tetrapolymerization of the monopyrrole PBG into the hydroxymethylbilane pre-uroporphyrinogen in several discrete steps. The protein is Porphobilinogen deaminase of Xanthomonas campestris pv. campestris (strain B100).